A 97-amino-acid polypeptide reads, in one-letter code: MQKSEGFRSKTRYKLSKHPRQKGLFPLTRALKCYTEGDTVHVVIDPSVQKGMPHPKFHGKTGTVVSQRGRAFLVRVKDGGKYKDIIARPQHLRESKL.

It belongs to the eukaryotic ribosomal protein eL21 family.

In Methanococcus vannielii (strain ATCC 35089 / DSM 1224 / JCM 13029 / OCM 148 / SB), this protein is Large ribosomal subunit protein eL21.